The sequence spans 371 residues: Cytochrome b (371 aa).

4 helical membrane-spanning segments follow: residues 25-45, 69-90, 105-125, and 170-190; these read FGSM…FLAI, WIMQ…YIHI, WLSG…GYVL, and FFAL…IHII. 2 residues coordinate heme b: His75 and His89. Heme b contacts are provided by His174 and His188. Residue His193 participates in a ubiquinone binding. 4 consecutive transmembrane segments (helical) span residues 218–238, 280–300, 312–332, and 339–358; these read YKDL…LSFS, LGGT…PFTH, LSQT…WTAT, and FITI…IMNP.

It belongs to the cytochrome b family. In terms of assembly, the cytochrome bc1 complex contains 3 respiratory subunits (MT-CYB, CYC1 and UQCRFS1), 2 core proteins (UQCRC1 and UQCRC2) and probably 6 low-molecular weight proteins. The cofactor is heme b.

Its subcellular location is the mitochondrion inner membrane. Functionally, component of the ubiquinol-cytochrome c reductase complex (complex III or cytochrome b-c1 complex) that is part of the mitochondrial respiratory chain. The b-c1 complex mediates electron transfer from ubiquinol to cytochrome c. Contributes to the generation of a proton gradient across the mitochondrial membrane that is then used for ATP synthesis. This is Cytochrome b (MT-CYB) from Micrurus fulvius (Eastern coral snake).